The primary structure comprises 302 residues: Probable E3 ubiquitin-protein ligase RZFP34 (302 aa).

The segment at 54-130 adopts a CHY-type zinc-finger fold; the sequence is EGIMQYGCAH…VRQVCISCGV (77 aa). Positions 61, 63, 74, 75, 81, 84, 85, 100, 112, 115, 125, 128, 137, 140, 153, 154, 157, 160, 170, 171, 174, 177, 186, and 188 each coordinate Zn(2+). The CTCHY-type zinc-finger motif lies at 132-196; it reads MGKYFCEVCK…ACVEGAMHHD (65 aa). An RING-type; atypical zinc finger spans residues 197–240; it reads CPICFEYLFESTNDVSVLPCGHTIHVKCLREMEEHCQFACPLCS.

The protein localises to the nucleus. The enzyme catalyses S-ubiquitinyl-[E2 ubiquitin-conjugating enzyme]-L-cysteine + [acceptor protein]-L-lysine = [E2 ubiquitin-conjugating enzyme]-L-cysteine + N(6)-ubiquitinyl-[acceptor protein]-L-lysine.. It participates in protein modification; protein ubiquitination. Possesses transactivation activity in yeast cells. Involved in the regulation of stomatal aperture. May modulate the expression of genes that control stomata opening during heat shock or drought stress. The polypeptide is Probable E3 ubiquitin-protein ligase RZFP34 (Oryza sativa subsp. japonica (Rice)).